We begin with the raw amino-acid sequence, 382 residues long: uncharacterized protein (382 aa).

A run of 12 helical transmembrane segments spans residues 14-34 (GLLL…LWLA), 45-65 (MVSS…GYLI), 75-95 (YLAS…VGFW), 102-122 (FIAG…LMCS), 131-151 (LLAA…LLVS), 157-177 (LLHV…PLLF), 204-224 (LGVN…GLMP), 235-255 (ASIG…QWPV), 265-284 (LLVL…VMLT), 289-311 (APAL…AWAC), 325-345 (ALLL…AMLM), and 349-369 (SDNL…LMLL).

Belongs to the major facilitator superfamily. YcaD (TC 2.A.1.26) family.

The protein localises to the cell inner membrane. This is an uncharacterized protein from Salmonella arizonae (strain ATCC BAA-731 / CDC346-86 / RSK2980).